Consider the following 208-residue polypeptide: Probable GTP-binding protein EngB (208 aa).

The EngB-type G domain maps to 23–205 (LTSEMVILGR…RQTLLKYLLT (183 aa)). GTP-binding positions include 31 to 38 (GRSNVGKS), 57 to 61 (GKTRL), 84 to 87 (DLPG), 154 to 157 (TKFD), and 182 to 184 (FNA). Mg(2+) contacts are provided by Ser38 and Thr59.

Belongs to the TRAFAC class TrmE-Era-EngA-EngB-Septin-like GTPase superfamily. EngB GTPase family. It depends on Mg(2+) as a cofactor.

Its function is as follows. Necessary for normal cell division and for the maintenance of normal septation. The protein is Probable GTP-binding protein EngB of Helicobacter pylori (strain J99 / ATCC 700824) (Campylobacter pylori J99).